Consider the following 144-residue polypeptide: Protein E6 (144 aa).

Zinc fingers lie at residues 32–68 (CAFC…CALC) and 105–141 (CWLC…CLHC).

Belongs to the papillomaviridae E6 protein family. Forms homodimers. Interacts with ubiquitin-protein ligase UBE3A/E6-AP; this interaction stimulates UBE3A ubiquitin activity. Interacts with host TP53 and EP300; this interaction inhibits TP53 activity.

The protein localises to the host cytoplasm. The protein resides in the host nucleus. In terms of biological role, plays a major role in the induction and maintenance of cellular transformation. E6 associates with host UBE3A/E6-AP ubiquitin-protein ligase and modulates its activity. Sequesters tumor suppressor TP53 in the host cytoplasm and modulates its activity by interacting with host EP300 that results in the reduction of TP53 acetylation and activation. In turn, apoptosis induced by DNA damage is inhibited. E6 also protects host keratinocytes from apoptosis by mediating the degradation of host BAK1. May also inhibit host immune response. The polypeptide is Protein E6 (Homo sapiens (Human)).